We begin with the raw amino-acid sequence, 463 residues long: Metacaspase-1 (463 aa).

Residues 1–149 (MSWNQYPGGG…PQLQGQGGQS (149 aa)) form a disordered region. Positions 7–18 (PGGGHHQQGGYG) are enriched in gly residues. Residues 20–56 (RPPPPQWAQQGPPPPPNMGYRPPPPPQAYYNNPPPPQ) show a composition bias toward pro residues. Positions 57–83 (QYQRPAPQQNGYQQGGYQQQQQSQGNY) are enriched in low complexity. Active-site residues include His-247 and Cys-309.

The protein belongs to the peptidase C14B family.

Its function is as follows. Involved in cell death (apoptosis). This Cryptococcus neoformans var. neoformans serotype D (strain B-3501A) (Filobasidiella neoformans) protein is Metacaspase-1 (MCA1).